Reading from the N-terminus, the 499-residue chain is Hexokinase-2, chloroplastic (499 aa).

The transit peptide at 1–30 (MSVTVSSPAGRSFHISRSPYKKISKPRVII) directs the protein to the chloroplast. One can recognise a Hexokinase domain in the interval 39 to 490 (LAVAPILTKL…SGIGAALLAA (452 aa)). The tract at residues 94-232 (TGNEKGLFYA…GLGMQVSALV (139 aa)) is hexokinase small subdomain. Positions 108, 109, and 110 each coordinate ADP. D-glucose contacts are provided by Thr-198, Lys-199, Asn-233, and Asp-234. Residues 233-479 (NDTVATLAGA…KNVVIEHSKD (247 aa)) are hexokinase large subdomain. Thr-257 provides a ligand contact to ADP. Residues Asn-260, Glu-288, and Glu-318 each coordinate D-glucose. Gly-444 serves as a coordination point for ADP.

This sequence belongs to the hexokinase family. As to expression, expressed in vascular starch sheath, xylem parenchyma, guard cells and root tips.

It localises to the plastid. The protein localises to the chloroplast stroma. The enzyme catalyses a D-hexose + ATP = a D-hexose 6-phosphate + ADP + H(+). It catalyses the reaction D-fructose + ATP = D-fructose 6-phosphate + ADP + H(+). The catalysed reaction is D-glucose + ATP = D-glucose 6-phosphate + ADP + H(+). It functions in the pathway carbohydrate metabolism; hexose metabolism. The protein operates within carbohydrate degradation; glycolysis; D-glyceraldehyde 3-phosphate and glycerone phosphate from D-glucose: step 1/4. In terms of biological role, fructose and glucose phosphorylating enzyme. The chain is Hexokinase-2, chloroplastic (HXK2) from Nicotiana tabacum (Common tobacco).